Consider the following 411-residue polypeptide: Glutamate dehydrogenase 3, mitochondrial (411 aa).

A mitochondrion-targeting transit peptide spans 1–18 (MNALAATSRNFRQAARLL). Lys-102 is an active-site residue.

It belongs to the Glu/Leu/Phe/Val dehydrogenases family. As to expression, barely expressed in leaves, spikelets and roots. Glumes and stamens specific accumulation.

The protein localises to the mitochondrion. The catalysed reaction is L-glutamate + NAD(+) + H2O = 2-oxoglutarate + NH4(+) + NADH + H(+). It catalyses the reaction L-glutamate + NADP(+) + H2O = 2-oxoglutarate + NH4(+) + NADPH + H(+). In Oryza sativa subsp. japonica (Rice), this protein is Glutamate dehydrogenase 3, mitochondrial (GDH3).